The following is a 333-amino-acid chain: MALADRLLEAWYRGHPALVLLRPLEALFRCVAQRRRERFLRGEGGIYRAPVPVVVVGNVTVGGTGKTPLILWLIEACRRRGLRVGVVSRGYGARPPRLPWRVTADQSAGQAGDEPLLIVQRTGVPLAIDPDRPRAVRALLKEQPLDLILSDDGLQHYRLARDLELVLLDAVRGLGNGHCLPAGPLREPAERLASVDAVLHNGAAWDPPGGYAFSLLPSALVHMATGERRPLDHFPPGTALHALAGIGNPRRFFATLEALHWRPIPHAFADHARYRAEQLRFSPALPLVMTEKDAVKCRAFAPADCWYLAVDAVPSPAFADWFDAALARLLASS.

60–67 contacts ATP; it reads TVGGTGKT.

The protein belongs to the LpxK family.

It carries out the reaction a lipid A disaccharide + ATP = a lipid IVA + ADP + H(+). It functions in the pathway glycolipid biosynthesis; lipid IV(A) biosynthesis; lipid IV(A) from (3R)-3-hydroxytetradecanoyl-[acyl-carrier-protein] and UDP-N-acetyl-alpha-D-glucosamine: step 6/6. Transfers the gamma-phosphate of ATP to the 4'-position of a tetraacyldisaccharide 1-phosphate intermediate (termed DS-1-P) to form tetraacyldisaccharide 1,4'-bis-phosphate (lipid IVA). The polypeptide is Tetraacyldisaccharide 4'-kinase (Azotobacter vinelandii (strain DJ / ATCC BAA-1303)).